Reading from the N-terminus, the 269-residue chain is Phosphate import ATP-binding protein PstB (269 aa).

One can recognise an ABC transporter domain in the interval 22–264 (AEVRDLNFYY…PVQQKTADYV (243 aa)). 54 to 61 (GPSGCGKT) lines the ATP pocket.

Belongs to the ABC transporter superfamily. Phosphate importer (TC 3.A.1.7) family. In terms of assembly, the complex is composed of two ATP-binding proteins (PstB), two transmembrane proteins (PstC and PstA) and a solute-binding protein (PstS).

The protein resides in the cell inner membrane. The enzyme catalyses phosphate(out) + ATP + H2O = ADP + 2 phosphate(in) + H(+). Part of the ABC transporter complex PstSACB involved in phosphate import. Responsible for energy coupling to the transport system. The protein is Phosphate import ATP-binding protein PstB of Thermosynechococcus vestitus (strain NIES-2133 / IAM M-273 / BP-1).